Consider the following 125-residue polypeptide: MAPKVRAAKKGEKRVGKAKSGTAETAKRRRGKRKESYAIYIYKVLKQVHPDTGISSKAMGIMNSFVNDIFERIAVESSRLSLYNKKATISSREIQTAIRLLLPGELAKHAVSEGTKAVTKYTSSK.

The interval 1-32 is disordered; that stretch reads MAPKVRAAKKGEKRVGKAKSGTAETAKRRRGK. A glycan (O-linked (GlcNAc) serine) is linked at S112. A Glycyl lysine isopeptide (Lys-Gly) (interchain with G-Cter in ubiquitin) cross-link involves residue K120.

It belongs to the histone H2B family. In terms of assembly, the nucleosome is a histone octamer containing two molecules each of H2A, H2B, H3 and H4 assembled in one H3-H4 heterotetramer and two H2A-H2B heterodimers. The octamer wraps approximately 147 bp of DNA. Monoubiquitination of Lys-120 gives a specific tag for epigenetic transcriptional activation and is also prerequisite for histone H3 'Lys-4' and 'Lys-79' methylation. Post-translationally, glcNAcylation at Ser-112 promotes monoubiquitination of Lys-120. It fluctuates in response to extracellular glucose, and associates with transcribed genes.

It localises to the nucleus. Its subcellular location is the chromosome. Its function is as follows. Core component of nucleosome. Nucleosomes wrap and compact DNA into chromatin, limiting DNA accessibility to the cellular machineries which require DNA as a template. Histones thereby play a central role in transcription regulation, DNA repair, DNA replication and chromosomal stability. DNA accessibility is regulated via a complex set of post-translational modifications of histones, also called histone code, and nucleosome remodeling. This is Histone H2B from Acropora formosa (Staghorn coral).